A 248-amino-acid chain; its full sequence is Isoprenyl transferase (248 aa).

Residue Asp-23 is part of the active site. Asp-23 contributes to the Mg(2+) binding site. Substrate-binding positions include 24-27 (GNGR), Trp-28, Arg-36, His-40, and 68-70 (STE). The active-site Proton acceptor is Asn-71. Residues Trp-72, Arg-74, Arg-185, and 191–193 (RIS) each bind substrate. Glu-204 contributes to the Mg(2+) binding site.

The protein belongs to the UPP synthase family. In terms of assembly, homodimer. The cofactor is Mg(2+).

Its function is as follows. Catalyzes the condensation of isopentenyl diphosphate (IPP) with allylic pyrophosphates generating different type of terpenoids. The polypeptide is Isoprenyl transferase (Neisseria gonorrhoeae (strain ATCC 700825 / FA 1090)).